The chain runs to 493 residues: Glycerol kinase 2 (493 aa).

Ser12 contacts ADP. 2 residues coordinate ATP: Ser12 and Thr13. Ser12 contributes to the sn-glycerol 3-phosphate binding site. Position 16 (Lys16) interacts with ADP. Sn-glycerol 3-phosphate-binding residues include Arg82, Glu83, Tyr134, and Asp243. Arg82, Glu83, Tyr134, Asp243, and Gln244 together coordinate glycerol. ADP-binding residues include Thr265 and Gly308. Positions 265, 308, and 312 each coordinate ATP. ADP is bound at residue Asn413.

The protein belongs to the FGGY kinase family. In terms of assembly, homotetramer and homodimer (in equilibrium).

It carries out the reaction glycerol + ATP = sn-glycerol 3-phosphate + ADP + H(+). It participates in polyol metabolism; glycerol degradation via glycerol kinase pathway; sn-glycerol 3-phosphate from glycerol: step 1/1. With respect to regulation, activated by phosphorylation and inhibited by fructose 1,6-bisphosphate (FBP). Functionally, key enzyme in the regulation of glycerol uptake and metabolism. Catalyzes the phosphorylation of glycerol to yield sn-glycerol 3-phosphate. The chain is Glycerol kinase 2 from Clostridium tetani (strain Massachusetts / E88).